Reading from the N-terminus, the 634-residue chain is Threonine--tRNA ligase (634 aa).

Residues 1–61 (MINITLPDGS…DHDASLRIIT (61 aa)) form the TGS domain. A catalytic region spans residues 243 to 534 (DHRRIGKAQD…LIEHHAGAFP (292 aa)). The Zn(2+) site is built by C334, H385, and H511.

The protein belongs to the class-II aminoacyl-tRNA synthetase family. Homodimer. Requires Zn(2+) as cofactor.

The protein resides in the cytoplasm. It carries out the reaction tRNA(Thr) + L-threonine + ATP = L-threonyl-tRNA(Thr) + AMP + diphosphate + H(+). In terms of biological role, catalyzes the attachment of threonine to tRNA(Thr) in a two-step reaction: L-threonine is first activated by ATP to form Thr-AMP and then transferred to the acceptor end of tRNA(Thr). Also edits incorrectly charged L-seryl-tRNA(Thr). This chain is Threonine--tRNA ligase, found in Xanthomonas oryzae pv. oryzae (strain MAFF 311018).